Consider the following 432-residue polypeptide: Anaerobic glycerol-3-phosphate dehydrogenase subunit B (432 aa).

The protein belongs to the anaerobic G-3-P dehydrogenase subunit B family. In terms of assembly, composed of a catalytic GlpA/B dimer and of membrane bound GlpC. It depends on FMN as a cofactor.

It carries out the reaction a quinone + sn-glycerol 3-phosphate = dihydroxyacetone phosphate + a quinol. The protein operates within polyol metabolism; glycerol degradation via glycerol kinase pathway; glycerone phosphate from sn-glycerol 3-phosphate (anaerobic route): step 1/1. Conversion of glycerol 3-phosphate to dihydroxyacetone. Uses fumarate or nitrate as electron acceptor. This is Anaerobic glycerol-3-phosphate dehydrogenase subunit B from Haemophilus influenzae (strain PittGG).